A 429-amino-acid chain; its full sequence is MTQMEDAKKGVITDEMLYIANREGISPDKLRKLVAKGYTVIFRNKVHDWVKPVAVGSGVRVKVNANIGTSRDIINVEEEIEKAKVAVKYGADTIMDLSTGGDLDEIRRKIMKAVDVPIGTVPIYQAAEEMLAKGKAIIEMTEDDMWRAIEKHFKDGVDFATVHVGVTKEVVEKMKRIKRVVGMVSRGGTFLAAWILHWNQENPLYKDYDYLLELAKEYDVVLSLGDGLRPGGLPDAGDELQIAELYTLGRLVKRARKAGVQTMVEGPGHVPIDQIPAQIKLMKVATDNAPVYVLGPLVTDIFPGYDHIAGAIGGAIAALNGADFLCYVTPAEHLGLPNVEHVREGVIAAKLAAHAVNLLRFEDEYRKDYEMSLARGNLNWARQFEIAFDKDKFIEIRKERPTKTEACSMCGDLCAIKIIQEMLTKKQTS.

Residues Asn66, Met95, Tyr124, His163, 185–187 (SRG), 226–229 (DGLR), and Glu265 each bind substrate. His269 serves as a coordination point for Zn(2+). Tyr292 provides a ligand contact to substrate. Zn(2+) is bound at residue His333. [4Fe-4S] cluster is bound by residues Cys407, Cys410, and Cys414.

This sequence belongs to the ThiC family. Requires [4Fe-4S] cluster as cofactor.

It catalyses the reaction 5-amino-1-(5-phospho-beta-D-ribosyl)imidazole + S-adenosyl-L-methionine = 4-amino-2-methyl-5-(phosphooxymethyl)pyrimidine + CO + 5'-deoxyadenosine + formate + L-methionine + 3 H(+). The protein operates within cofactor biosynthesis; thiamine diphosphate biosynthesis. In terms of biological role, catalyzes the synthesis of the hydroxymethylpyrimidine phosphate (HMP-P) moiety of thiamine from aminoimidazole ribotide (AIR) in a radical S-adenosyl-L-methionine (SAM)-dependent reaction. The protein is Phosphomethylpyrimidine synthase of Pyrococcus abyssi (strain GE5 / Orsay).